Consider the following 281-residue polypeptide: Pantothenate synthetase (281 aa).

30–37 (MGNLHAGH) serves as a coordination point for ATP. Catalysis depends on His-37, which acts as the Proton donor. Gln-61 serves as a coordination point for (R)-pantoate. Gln-61 serves as a coordination point for beta-alanine. 149–152 (GRKD) is a binding site for ATP. Gln-155 serves as a coordination point for (R)-pantoate. Residues Val-178 and 186 to 189 (MSSR) contribute to the ATP site.

It belongs to the pantothenate synthetase family. As to quaternary structure, homodimer.

The protein localises to the cytoplasm. The catalysed reaction is (R)-pantoate + beta-alanine + ATP = (R)-pantothenate + AMP + diphosphate + H(+). The protein operates within cofactor biosynthesis; (R)-pantothenate biosynthesis; (R)-pantothenate from (R)-pantoate and beta-alanine: step 1/1. Catalyzes the condensation of pantoate with beta-alanine in an ATP-dependent reaction via a pantoyl-adenylate intermediate. The sequence is that of Pantothenate synthetase from Shewanella amazonensis (strain ATCC BAA-1098 / SB2B).